The following is a 1887-amino-acid chain: ATP-dependent DNA helicase tlh1 (1887 aa).

The span at 329–347 shows a compositional bias: basic and acidic residues; it reads NQQRREQQDKGENKKRQDD. 3 disordered regions span residues 329-372, 504-552, and 1110-1135; these read NQQR…EEEE, ERKE…NTDD, and MVEG…EMTQ. Composition is skewed to acidic residues over residues 360 to 372 and 524 to 533; these read LEDD…EEEE and SAEDDNDNDN. Low complexity predominate over residues 540-549; that stretch reads NNNNNNNNTN. Residues 1112 to 1131 show a composition bias toward basic and acidic residues; that stretch reads EGDKEKDKTNEEKNKDEVKA. Residues 1200-1375 form the Helicase ATP-binding domain; it reads YFSLLNRMNL…RQTFCTNFYV (176 aa). Residues 1213–1220 and 1240–1247 contribute to the ATP site; these read LPTGGGKS and MNMVTLVL. A DEAH box motif is present at residues 1322-1325; it reads DEAH. Residues 1401 to 1559 form the Helicase C-terminal domain; sequence DLRTLMKRTK…CVRSFLASEM (159 aa). A disordered region spans residues 1613–1643; the sequence is YNASFSSSPPPQPGNSSGMSAMNTNTTSTTP. Residues 1626–1642 are compositionally biased toward low complexity; it reads GNSSGMSAMNTNTTSTT. Residues 1804 to 1821 form a CCHC-type zinc finger; it reads STCYKCGKADHNLRECKL.

The protein belongs to the helicase family. RecQ subfamily.

The enzyme catalyses Couples ATP hydrolysis with the unwinding of duplex DNA by translocating in the 3'-5' direction.. The catalysed reaction is ATP + H2O = ADP + phosphate + H(+). In terms of biological role, a probable ATP-dependent 3'-5' DNA helicase. Has a role in telomerase-independent telomere maintenance. This is ATP-dependent DNA helicase tlh1 from Schizosaccharomyces pombe (strain 972 / ATCC 24843) (Fission yeast).